The chain runs to 144 residues: Antigenic protein SchS21 (144 aa).

An N-linked (GlcNAc...) asparagine glycan is attached at Asn-36. The igE-binding epitope stretch occupies residues 91–105; sequence VKQMWPAESRKPMSG.

Homodimer. Mg(2+) is required as a cofactor.

The protein localises to the secreted. Its function is as follows. Has exodeoxyribonuclease activity with lambda-DNA and salmon testes dsDNA. No activity with circular plasmid DNA. The physiological role of this enzyme may be to degrade environmental DNA, and thus mobilize nitrogen for uptake. This is Antigenic protein SchS21 from Stachybotrys chartarum (Toxic black mold).